The primary structure comprises 247 residues: UPF0309 protein LMOf2365_2617 (247 aa).

The region spanning 31–214 is the SIS domain; the sequence is VAESIENDGV…ETMVNDNFTP (184 aa).

This sequence belongs to the UPF0309 family.

This chain is UPF0309 protein LMOf2365_2617, found in Listeria monocytogenes serotype 4b (strain F2365).